We begin with the raw amino-acid sequence, 132 residues long: Acyl-CoA thioester hydrolase YciA (132 aa).

The HotDog ACOT-type domain maps to 8 to 123 (PQGDLVLRTL…LFKYVAVDPE (116 aa)).

The protein belongs to the acyl coenzyme A hydrolase family.

In terms of biological role, catalyzes the hydrolysis of the thioester bond in palmitoyl-CoA and malonyl-CoA. The sequence is that of Acyl-CoA thioester hydrolase YciA (yciA) from Escherichia coli O6:H1 (strain CFT073 / ATCC 700928 / UPEC).